Consider the following 71-residue polypeptide: ATP synthase subunit c (71 aa).

Helical transmembrane passes span 5-25 (AIGIAAGLAAIGGAIGVAIIV) and 47-67 (FIGAPLAEAVPIIAIVIAFLL).

It belongs to the ATPase C chain family. F-type ATPases have 2 components, F(1) - the catalytic core - and F(0) - the membrane proton channel. F(1) has five subunits: alpha(3), beta(3), gamma(1), delta(1), epsilon(1). F(0) has three main subunits: a(1), b(2) and c(10-14). The alpha and beta chains form an alternating ring which encloses part of the gamma chain. F(1) is attached to F(0) by a central stalk formed by the gamma and epsilon chains, while a peripheral stalk is formed by the delta and b chains.

It is found in the cell membrane. Functionally, f(1)F(0) ATP synthase produces ATP from ADP in the presence of a proton or sodium gradient. F-type ATPases consist of two structural domains, F(1) containing the extramembraneous catalytic core and F(0) containing the membrane proton channel, linked together by a central stalk and a peripheral stalk. During catalysis, ATP synthesis in the catalytic domain of F(1) is coupled via a rotary mechanism of the central stalk subunits to proton translocation. In terms of biological role, key component of the F(0) channel; it plays a direct role in translocation across the membrane. A homomeric c-ring of between 10-14 subunits forms the central stalk rotor element with the F(1) delta and epsilon subunits. This Shouchella clausii (strain KSM-K16) (Alkalihalobacillus clausii) protein is ATP synthase subunit c.